The following is a 188-amino-acid chain: Threonylcarbamoyl-AMP synthase (188 aa).

The YrdC-like domain maps to 3 to 188 (QLQPSAVATT…RSGQILRNGS (186 aa)).

It belongs to the SUA5 family. TsaC subfamily.

It localises to the cytoplasm. The enzyme catalyses L-threonine + hydrogencarbonate + ATP = L-threonylcarbamoyladenylate + diphosphate + H2O. Its function is as follows. Required for the formation of a threonylcarbamoyl group on adenosine at position 37 (t(6)A37) in tRNAs that read codons beginning with adenine. Catalyzes the conversion of L-threonine, HCO(3)(-)/CO(2) and ATP to give threonylcarbamoyl-AMP (TC-AMP) as the acyladenylate intermediate, with the release of diphosphate. The protein is Threonylcarbamoyl-AMP synthase of Shewanella frigidimarina (strain NCIMB 400).